The primary structure comprises 154 residues: Myoglobin (154 aa).

One can recognise a Globin domain in the interval 2–148 (GLSDDEWHHV…FRNDMASKYK (147 aa)). Histidine 65 is a binding site for nitrite. O2 is bound at residue histidine 65. Heme b is bound at residue histidine 94.

It belongs to the globin family. Monomeric.

The protein localises to the cytoplasm. The protein resides in the sarcoplasm. It carries out the reaction Fe(III)-heme b-[protein] + nitric oxide + H2O = Fe(II)-heme b-[protein] + nitrite + 2 H(+). It catalyses the reaction H2O2 + AH2 = A + 2 H2O. Monomeric heme protein which primary function is to store oxygen and facilitate its diffusion within muscle tissues. Reversibly binds oxygen through a pentacoordinated heme iron and enables its timely and efficient release as needed during periods of heightened demand. Depending on the oxidative conditions of tissues and cells, and in addition to its ability to bind oxygen, it also has a nitrite reductase activity whereby it regulates the production of bioactive nitric oxide. Under stress conditions, like hypoxia and anoxia, it also protects cells against reactive oxygen species thanks to its pseudoperoxidase activity. This is Myoglobin (MB) from Graptemys geographica (Common map turtle).